Consider the following 526-residue polypeptide: ATP synthase subunit alpha (526 aa).

ATP is bound at residue 171–178 (GDRQTGKT).

Belongs to the ATPase alpha/beta chains family. F-type ATPases have 2 components, CF(1) - the catalytic core - and CF(0) - the membrane proton channel. CF(1) has five subunits: alpha(3), beta(3), gamma(1), delta(1), epsilon(1). CF(0) has four main subunits: a, b, b' and c.

The protein resides in the cell inner membrane. It carries out the reaction ATP + H2O + 4 H(+)(in) = ADP + phosphate + 5 H(+)(out). In terms of biological role, produces ATP from ADP in the presence of a proton gradient across the membrane. The alpha chain is a regulatory subunit. The sequence is that of ATP synthase subunit alpha from Chlorobium phaeobacteroides (strain BS1).